We begin with the raw amino-acid sequence, 128 residues long: Diacylglycerol kinase (128 aa).

Glu-34 serves as a coordination point for a divalent metal cation. 2 helical membrane-spanning segments follow: residues 35-55 (SAFRQIVILALFCIVLASYLA) and 58-78 (FLEWGLLILPCFLSVVVELIN). The Proton acceptor role is filled by Glu-75. Position 82 (Glu-82) interacts with a divalent metal cation. Residues 107-127 (QLIGLIFWTLIWGRYLLALYL) form a helical membrane-spanning segment.

This sequence belongs to the bacterial diacylglycerol kinase family. Mg(2+) is required as a cofactor.

It is found in the cell inner membrane. It catalyses the reaction a 1,2-diacyl-sn-glycerol + ATP = a 1,2-diacyl-sn-glycero-3-phosphate + ADP + H(+). Functionally, catalyzes the ATP-dependent phosphorylation of sn-l,2-diacylglycerol (DAG) to phosphatidic acid. Involved in the recycling of diacylglycerol produced as a by-product during membrane-derived oligosaccharide (MDO) biosynthesis. This chain is Diacylglycerol kinase (dgkA), found in Helicobacter pylori (strain ATCC 700392 / 26695) (Campylobacter pylori).